A 231-amino-acid polypeptide reads, in one-letter code: MANVSKRLRALKEKIDRSRNYPVVDALQLVKDSATAKFDESIDVAVNLGVDARKSDQMVRGAVVLPKGIGKTVRVAVFAQGDNAQKARDAGADIVGFDDLAADIKAGKMDFDVVIATPDAMRVVGQLGQILGPRGLMPNPKVGTVSPDVVGAVKNAKAGQVQYRTDKGGIVHCTIGRASFSVDDLKENLVALLDALQRAKPASSKGIYFKRLSVSSTMGVGVRVDQGSVAA.

This sequence belongs to the universal ribosomal protein uL1 family. Part of the 50S ribosomal subunit.

Binds directly to 23S rRNA. The L1 stalk is quite mobile in the ribosome, and is involved in E site tRNA release. Functionally, protein L1 is also a translational repressor protein, it controls the translation of the L11 operon by binding to its mRNA. This Thiobacillus denitrificans (strain ATCC 25259 / T1) protein is Large ribosomal subunit protein uL1.